Here is a 74-residue protein sequence, read N- to C-terminus: UPF0346 protein SE_1114 (74 aa).

The protein belongs to the UPF0346 family.

The chain is UPF0346 protein SE_1114 from Staphylococcus epidermidis (strain ATCC 12228 / FDA PCI 1200).